The primary structure comprises 400 residues: Cytohesin-3 (400 aa).

Residues 14–61 (EDLSLEEREELLDIRRRKKELIDDIERLKYEIAEVMTEIDNLTSVEES) adopt a coiled-coil conformation. The region spanning 77-206 (FNMDPKKGIQ…IIMLNTSLHN (130 aa)) is the SEC7 domain. Residues 265–381 (PDREGWLLKL…WMKSIKASIS (117 aa)) enclose the PH domain. A 1,2-diacyl-sn-glycero-3-phospho-(1D-myo-inositol-3,4,5-trisphosphate) contacts are provided by residues 273–281 (KLGGGRVKT), R285, Y296, R306, and N355. Positions 392–400 (RKRRIANKK) are C-terminal autoinhibitory region.

Interacts with TAMALIN. As to expression, present in all tissues tested, with highest protein levels in brain and adrenal.

It localises to the cytoplasm. Its subcellular location is the cytosol. The protein resides in the cell membrane. Functionally, promotes guanine-nucleotide exchange on ARF1. Promotes the activation of ARF factors through replacement of GDP with GTP. In Rattus norvegicus (Rat), this protein is Cytohesin-3 (Cyth3).